Reading from the N-terminus, the 316-residue chain is MHQGSRITAVGHYQPARILTNEDLAGMVDTSDEWIRSRVGIRTRRIAGPDEPVDELAGHAAAKALASAGLTPADVDLVVVATSTAIDRSPNTAARVAARLGIPGPAALDLNVVCAGFTHALATADHAVRAGSASRALVVGADKMSEVVDWTDRTTCVLVGDGAGAAVVEACAPGEEPGIGPVLWGSVPEMGNAVRIEGTPPRFAQEGQSVYRWATTRLPAIARQACERSGLEPADLAAVVLHQANLRIVEPLAAKIGAVNAVVARDVVESGNTSAASIPLALSKLAERGEITTGDPALLFGFGGNLSYAGQVVRCP.

Active-site residues include Cys-114 and His-242. The tract at residues 243–247 is ACP-binding; that stretch reads QANLR. Asn-272 is an active-site residue.

It belongs to the thiolase-like superfamily. FabH family. Homodimer.

It localises to the cytoplasm. The enzyme catalyses malonyl-[ACP] + acetyl-CoA + H(+) = 3-oxobutanoyl-[ACP] + CO2 + CoA. Its pathway is lipid metabolism; fatty acid biosynthesis. In terms of biological role, catalyzes the condensation reaction of fatty acid synthesis by the addition to an acyl acceptor of two carbons from malonyl-ACP. Catalyzes the first condensation reaction which initiates fatty acid synthesis and may therefore play a role in governing the total rate of fatty acid production. Possesses both acetoacetyl-ACP synthase and acetyl transacylase activities. Its substrate specificity determines the biosynthesis of branched-chain and/or straight-chain of fatty acids. The polypeptide is Beta-ketoacyl-[acyl-carrier-protein] synthase III 4 (Streptomyces coelicolor (strain ATCC BAA-471 / A3(2) / M145)).